A 550-amino-acid chain; its full sequence is Dihydroxy-acid dehydratase (550 aa).

Aspartate 78 contributes to the Mg(2+) binding site. Residue cysteine 119 participates in [2Fe-2S] cluster binding. The Mg(2+) site is built by aspartate 120 and lysine 121. N6-carboxylysine is present on lysine 121. Cysteine 191 provides a ligand contact to [2Fe-2S] cluster. Glutamate 440 is a binding site for Mg(2+). Serine 466 serves as the catalytic Proton acceptor.

It belongs to the IlvD/Edd family. In terms of assembly, homodimer. [2Fe-2S] cluster is required as a cofactor. It depends on Mg(2+) as a cofactor.

It carries out the reaction (2R)-2,3-dihydroxy-3-methylbutanoate = 3-methyl-2-oxobutanoate + H2O. It catalyses the reaction (2R,3R)-2,3-dihydroxy-3-methylpentanoate = (S)-3-methyl-2-oxopentanoate + H2O. It functions in the pathway amino-acid biosynthesis; L-isoleucine biosynthesis; L-isoleucine from 2-oxobutanoate: step 3/4. Its pathway is amino-acid biosynthesis; L-valine biosynthesis; L-valine from pyruvate: step 3/4. Its function is as follows. Functions in the biosynthesis of branched-chain amino acids. Catalyzes the dehydration of (2R,3R)-2,3-dihydroxy-3-methylpentanoate (2,3-dihydroxy-3-methylvalerate) into 2-oxo-3-methylpentanoate (2-oxo-3-methylvalerate) and of (2R)-2,3-dihydroxy-3-methylbutanoate (2,3-dihydroxyisovalerate) into 2-oxo-3-methylbutanoate (2-oxoisovalerate), the penultimate precursor to L-isoleucine and L-valine, respectively. The chain is Dihydroxy-acid dehydratase from Methanococcus aeolicus (strain ATCC BAA-1280 / DSM 17508 / OCM 812 / Nankai-3).